The primary structure comprises 235 residues: Large ribosomal subunit protein uL3 (235 aa).

The disordered stretch occupies residues 150–189; it reads AGGPASHGSGHHRHAGSTGMRSTPGRGLPGGKKAGQMGNE.

The protein belongs to the universal ribosomal protein uL3 family. Part of the 50S ribosomal subunit. Forms a cluster with proteins L14 and L19.

One of the primary rRNA binding proteins, it binds directly near the 3'-end of the 23S rRNA, where it nucleates assembly of the 50S subunit. The chain is Large ribosomal subunit protein uL3 from Protochlamydia amoebophila (strain UWE25).